Reading from the N-terminus, the 470-residue chain is Probable tocopherol cyclase, chloroplastic (470 aa).

The transit peptide at 1–61 (MDLAAAAVAV…APTPRDRALR (61 aa)) directs the protein to the chloroplast. Residues 14–48 (RPAPPPRRCAPRRHRRALAPRAASSSPSPSTAVAA) are disordered. Residues 22–31 (CAPRRHRRAL) are compositionally biased toward basic residues. The segment covering 32 to 48 (APRAASSSPSPSTAVAA) has biased composition (low complexity).

Expressed in the roots, stems, leaves and spikelets.

It is found in the plastid. It localises to the chloroplast. The protein localises to the plastoglobule. It participates in cofactor biosynthesis; tocopherol biosynthesis. Functionally, involved in the synthesis of both tocopherols and tocotrienols (vitamin E), which presumably protect photosynthetic complexes from oxidative stress. Catalyzes the conversion of 2-methyl-6-phytyl-1,4-hydroquinone and 2,3-dimethyl-5-phytyl-1,4-hydroquinone (DMPQ) to delta- and gamma-tocopherol respectively. Also converts 2,3-dimethyl-5-geranylgeranyl-1,4-hydroquinone (DMGQ) to gamma-tocotrienol. The polypeptide is Probable tocopherol cyclase, chloroplastic (VTE1) (Oryza sativa subsp. japonica (Rice)).